The following is a 231-amino-acid chain: Cytidylate kinase (231 aa).

11–19 (GHSSCGKST) lines the ATP pocket.

The protein belongs to the cytidylate kinase family. Type 1 subfamily.

It localises to the cytoplasm. The catalysed reaction is CMP + ATP = CDP + ADP. It catalyses the reaction dCMP + ATP = dCDP + ADP. The protein is Cytidylate kinase of Porphyromonas gingivalis (strain ATCC BAA-308 / W83).